A 610-amino-acid polypeptide reads, in one-letter code: UvrABC system protein C (610 aa).

Positions 16–94 (SQPGVYRMYD…IKLYQPRYNV (79 aa)) constitute a GIY-YIG domain. A UVR domain is found at 204-239 (DQVLTQLISRMETASQNLEFEEAARIRDQIQAVRRV).

It belongs to the UvrC family. Interacts with UvrB in an incision complex.

The protein localises to the cytoplasm. In terms of biological role, the UvrABC repair system catalyzes the recognition and processing of DNA lesions. UvrC both incises the 5' and 3' sides of the lesion. The N-terminal half is responsible for the 3' incision and the C-terminal half is responsible for the 5' incision. The chain is UvrABC system protein C from Escherichia coli O139:H28 (strain E24377A / ETEC).